The chain runs to 183 residues: Apo-citrate lyase phosphoribosyl-dephospho-CoA transferase (183 aa).

This sequence belongs to the CitX family.

It catalyses the reaction apo-[citrate lyase ACP] + 2'-(5''-triphospho-alpha-D-ribosyl)-3'-dephospho-CoA = holo-[citrate lyase ACP] + diphosphate. Its function is as follows. Transfers 2-(5''-triphosphoribosyl)-3'-dephosphocoenzyme-A on a serine residue to the apo-acyl carrier protein (gamma chain) of the citrate lyase to yield holo-acyl carrier protein. The sequence is that of Apo-citrate lyase phosphoribosyl-dephospho-CoA transferase from Shigella flexneri serotype 5b (strain 8401).